Consider the following 61-residue polypeptide: Large ribosomal subunit protein uL30 (61 aa).

This sequence belongs to the universal ribosomal protein uL30 family. As to quaternary structure, part of the 50S ribosomal subunit.

The sequence is that of Large ribosomal subunit protein uL30 from Thermosipho melanesiensis (strain DSM 12029 / CIP 104789 / BI429).